We begin with the raw amino-acid sequence, 1148 residues long: Zinc finger CCCH domain-containing protein 18 (1148 aa).

Over residues 1–13 (MDTPESPTQSPQS) the composition is skewed to low complexity. Disordered regions lie at residues 1–315 (MDTP…PMDR), 380–417 (DPFSPNGAPPGGAAGGGPHPLMPANPWGAPAVEELPPP), and 521–1127 (YTET…REEL). Composition is skewed to basic and acidic residues over residues 53-73 (VPEHGGDSDSEDRDRQPAGRE) and 82-96 (EDYKLDREEREDIHQ). Composition is skewed to acidic residues over residues 144-156 (ERGDDDEEEEEDE) and 167-176 (ELEEEEDEEE). Over residues 190–202 (DLKDESSVSRDLD) the composition is skewed to basic and acidic residues. Acidic residues-rich tracts occupy residues 203–214 (EHELDYDEEVPE) and 233–245 (EDGEDEEEEDEEE). The span at 261 to 289 (DNRDTPLRKSEDSREGGRRDSFRDKKKEE) shows a compositional bias: basic and acidic residues. Positions 290 to 306 (DDGEIDEGEIDDDDLEE) are enriched in acidic residues. Residues 388–397 (PPGGAAGGGP) show a composition bias toward gly residues. Residues 530–615 (PDRERERDPR…EKKDEKEKTL (86 aa)) are compositionally biased toward basic and acidic residues. Residues 543–584 (RERERERERDHRERERRQREREREREREREKDSRRRKDEWDR) are a coiled coil. Residues 622–631 (NMPPRGPMEP) show a composition bias toward pro residues. Positions 632–646 (PTKKDMLSVTKRPDE) are enriched in basic and acidic residues. A Phosphoserine modification is found at S666. Positions 677–740 (SGSSVSLSNS…SRSGSFSSSP (64 aa)) are enriched in low complexity. Composition is skewed to pro residues over residues 783 to 800 (KVMPSPSLPEQPGKPPKP) and 807 to 817 (PPNPRPPGRPP). Residues 818 to 833 (GPREPREPPNMREGRK) show a composition bias toward basic and acidic residues. 3 stretches are compositionally biased toward low complexity: residues 847–875 (VSGSVSGSSYSGSSSRSRSRSSSASASRS), 882–903 (SLSVSSVSSVSSASSSSSSVRS), and 914–925 (ASPVSSASSRSP). 2 stretches are compositionally biased toward basic and acidic residues: residues 933-964 (DRGPPRERGPNKERGKPPKKDEPFKDERKRVD) and 1012-1029 (QTDRSNRKRYFPSDKERP). S1056 carries the post-translational modification Phosphoserine. Low complexity-rich tracts occupy residues 1083–1098 (PAKSSGKGPAAASAAK) and 1107–1119 (GSASGSAPGKPSS). Residues 1118–1146 (SSTLSRREELLKQLKAVEDAIARKRAKIP) are a coiled coil.

It is found in the nucleus. The polypeptide is Zinc finger CCCH domain-containing protein 18 (zc3h18) (Danio rerio (Zebrafish)).